A 136-amino-acid chain; its full sequence is Protein PsiE (136 aa).

A run of 4 helical transmembrane segments spans residues 15-35 (ILQN…VVFL), 55-75 (YELV…ALIV), 83-103 (HFPL…LIIV), and 108-128 (PMDV…LWLC).

Belongs to the PsiE family.

It is found in the cell inner membrane. The sequence is that of Protein PsiE from Salmonella agona (strain SL483).